The primary structure comprises 321 residues: tRNA(Ile)-lysidine synthase (321 aa).

30 to 35 (SGGSDS) provides a ligand contact to ATP.

The protein belongs to the tRNA(Ile)-lysidine synthase family.

The protein localises to the cytoplasm. It carries out the reaction cytidine(34) in tRNA(Ile2) + L-lysine + ATP = lysidine(34) in tRNA(Ile2) + AMP + diphosphate + H(+). Functionally, ligates lysine onto the cytidine present at position 34 of the AUA codon-specific tRNA(Ile) that contains the anticodon CAU, in an ATP-dependent manner. Cytidine is converted to lysidine, thus changing the amino acid specificity of the tRNA from methionine to isoleucine. The chain is tRNA(Ile)-lysidine synthase from Chlamydia muridarum (strain MoPn / Nigg).